The chain runs to 264 residues: S-adenosylmethionine decarboxylase proenzyme (264 aa).

Catalysis depends on Ser111, which acts as the Schiff-base intermediate with substrate; via pyruvic acid. The residue at position 111 (Ser111) is a Pyruvic acid (Ser); by autocatalysis. His116 functions as the Proton acceptor; for processing activity in the catalytic mechanism. Cys139 serves as the catalytic Proton donor; for catalytic activity.

The protein belongs to the prokaryotic AdoMetDC family. Type 2 subfamily. As to quaternary structure, heterooctamer of four alpha and four beta chains arranged as a tetramer of alpha/beta heterodimers. It depends on pyruvate as a cofactor. Post-translationally, is synthesized initially as an inactive proenzyme. Formation of the active enzyme involves a self-maturation process in which the active site pyruvoyl group is generated from an internal serine residue via an autocatalytic post-translational modification. Two non-identical subunits are generated from the proenzyme in this reaction, and the pyruvate is formed at the N-terminus of the alpha chain, which is derived from the carboxyl end of the proenzyme. The post-translation cleavage follows an unusual pathway, termed non-hydrolytic serinolysis, in which the side chain hydroxyl group of the serine supplies its oxygen atom to form the C-terminus of the beta chain, while the remainder of the serine residue undergoes an oxidative deamination to produce ammonia and the pyruvoyl group blocking the N-terminus of the alpha chain.

It carries out the reaction S-adenosyl-L-methionine + H(+) = S-adenosyl 3-(methylsulfanyl)propylamine + CO2. It participates in amine and polyamine biosynthesis; S-adenosylmethioninamine biosynthesis; S-adenosylmethioninamine from S-adenosyl-L-methionine: step 1/1. Catalyzes the decarboxylation of S-adenosylmethionine to S-adenosylmethioninamine (dcAdoMet), the propylamine donor required for the synthesis of the polyamines spermine and spermidine from the diamine putrescine. The protein is S-adenosylmethionine decarboxylase proenzyme of Geobacillus thermodenitrificans (strain NG80-2).